Here is a 36-residue protein sequence, read N- to C-terminus: Pollen allergen Dac g 2 (36 aa).

This sequence belongs to the expansin family. Expansin B subfamily.

It is found in the secreted. The protein is Pollen allergen Dac g 2 of Dactylis glomerata (Orchard grass).